The chain runs to 251 residues: Blue-light absorbing proteorhodopsin (251 aa).

The first 18 residues, 1–18, serve as a signal peptide directing secretion; sequence MGKLLLILGSAIALPSFA. 7 helical membrane passes run 30-50, 65-85, 97-117, 120-140, 144-164, 190-210, and 223-243; these read VGVSFWLVTAGMLAATVFFFV, VSGLITGIAFWHYLYMRGVWI, IDWLLTVPLQVVEFYLILAAC, VAASLFKKLLAGSLVMLGAGF, AGLAPVLPAFIIGMAGWLYMI, MMMIIVVGWAIYPAGYAAGYL, and LIYNLADFVNKILFGLIIWNV. At Lys-233 the chain carries N6-(retinylidene)lysine.

The protein belongs to the archaeal/bacterial/fungal opsin family. In terms of processing, contains one covalently linked retinal chromophore.

The protein localises to the cell membrane. Light-driven proton pump. May have a regulatory rather than energy harvesting function, based on light-induced opening of proton channels, to modulate cell physiology depending on light intensity variations. Could be, therefore, a sensory rhodopsin, potentially associated with a transducer component. This is Blue-light absorbing proteorhodopsin from Gamma-proteobacterium Hot 75m4.